Here is a 233-residue protein sequence, read N- to C-terminus: Endo-1,4-beta-xylanase 1 (233 aa).

A signal peptide spans 1–20 (MVSFTSIVTAVVALAGSALA). An N-linked (GlcNAc...) asparagine glycan is attached at N27. One can recognise a GH11 domain in the interval 40–230 (QSTPSSTGRH…SAGNSNINVQ (191 aa)). Catalysis depends on E126, which acts as the Nucleophile. Catalysis depends on E217, which acts as the Proton donor.

It belongs to the glycosyl hydrolase 11 (cellulase G) family.

Its subcellular location is the secreted. It carries out the reaction Endohydrolysis of (1-&gt;4)-beta-D-xylosidic linkages in xylans.. It participates in glycan degradation; xylan degradation. Endo-1,4-beta-xylanase involved in the hydrolysis of xylan, a major structural heterogeneous polysaccharide found in plant biomass representing the second most abundant polysaccharide in the biosphere, after cellulose. Accounts for approximately 70 percent of the endoxylanase activity in the culture filtrate. The protein is Endo-1,4-beta-xylanase 1 (XYL1) of Pyricularia grisea (Crabgrass-specific blast fungus).